We begin with the raw amino-acid sequence, 537 residues long: Di/tripeptide-binding protein 1 (537 aa).

The first 29 residues, 1 to 29 (MRRNAVIRSAIMPSLLGAALVAAVPQAFA), serve as a signal peptide directing secretion.

The protein belongs to the bacterial solute-binding protein 5 family. The complex is composed of two ATP-binding proteins (DppD and DppF), two transmembrane proteins (DppB and DppC) and a solute-binding protein (DppA1). Five orthologous SBPs (DppA1-A5) are present in P.aeruginosa, which increases the substrate specificity of the DppBCDF transporter.

Its function is as follows. Part of the ABC transporter DppABCDF involved in the uptake of various di/tripeptides. Prefers dipeptides with acidic residues at the C-terminal end. Involved in the uptake of phaseolotoxin, a toxic tripeptide inhibiting the enzyme ornithine carbamoyltransferase. The chain is Di/tripeptide-binding protein 1 from Pseudomonas aeruginosa (strain UCBPP-PA14).